A 216-amino-acid polypeptide reads, in one-letter code: RNA pyrophosphohydrolase (216 aa).

Positions 6-149 (GFRPNVGIIL…KRDVYQLALT (144 aa)) constitute a Nudix hydrolase domain. The short motif at 38–59 (GGIKYGETPMQAMYRELHEETG) is the Nudix box element. A disordered region spans residues 159-188 (AQRTDKSRGPRAPRYPRVANGHAASEAPAA).

The protein belongs to the Nudix hydrolase family. RppH subfamily. A divalent metal cation serves as cofactor.

Functionally, accelerates the degradation of transcripts by removing pyrophosphate from the 5'-end of triphosphorylated RNA, leading to a more labile monophosphorylated state that can stimulate subsequent ribonuclease cleavage. The sequence is that of RNA pyrophosphohydrolase from Burkholderia mallei (strain NCTC 10247).